The sequence spans 198 residues: NAD(P)H dehydrogenase (quinone) (198 aa).

A Flavodoxin-like domain is found at 4–189 (VLVLYYSMYG…SIARYQGEYV (186 aa)). FMN contacts are provided by residues 10-15 (SMYGHI) and 78-80 (TRF). An NAD(+)-binding site is contributed by Y12. Residue W98 coordinates substrate. FMN-binding positions include 113-118 (STGTGG) and H133.

Belongs to the WrbA family. FMN serves as cofactor.

It catalyses the reaction a quinone + NADH + H(+) = a quinol + NAD(+). The enzyme catalyses a quinone + NADPH + H(+) = a quinol + NADP(+). The chain is NAD(P)H dehydrogenase (quinone) from Escherichia fergusonii (strain ATCC 35469 / DSM 13698 / CCUG 18766 / IAM 14443 / JCM 21226 / LMG 7866 / NBRC 102419 / NCTC 12128 / CDC 0568-73).